Here is a 416-residue protein sequence, read N- to C-terminus: CCA-adding enzyme (416 aa).

The ATP site is built by serine 42 and lysine 45. CTP contacts are provided by serine 42 and lysine 45. The Mg(2+) site is built by aspartate 54, aspartate 56, and aspartate 107. ATP contacts are provided by histidine 130, lysine 150, and tyrosine 159. CTP contacts are provided by histidine 130, lysine 150, and tyrosine 159.

Belongs to the tRNA nucleotidyltransferase/poly(A) polymerase family. Archaeal CCA-adding enzyme subfamily. In terms of assembly, homodimer. Mg(2+) is required as a cofactor.

The catalysed reaction is a tRNA precursor + 2 CTP + ATP = a tRNA with a 3' CCA end + 3 diphosphate. The enzyme catalyses a tRNA with a 3' CCA end + 2 CTP + ATP = a tRNA with a 3' CCACCA end + 3 diphosphate. Functionally, catalyzes the addition and repair of the essential 3'-terminal CCA sequence in tRNAs without using a nucleic acid template. Adds these three nucleotides in the order of C, C, and A to the tRNA nucleotide-73, using CTP and ATP as substrates and producing inorganic pyrophosphate. tRNA 3'-terminal CCA addition is required both for tRNA processing and repair. Also involved in tRNA surveillance by mediating tandem CCA addition to generate a CCACCA at the 3' terminus of unstable tRNAs. While stable tRNAs receive only 3'-terminal CCA, unstable tRNAs are marked with CCACCA and rapidly degraded. This is CCA-adding enzyme from Sulfolobus acidocaldarius (strain ATCC 33909 / DSM 639 / JCM 8929 / NBRC 15157 / NCIMB 11770).